Here is a 345-residue protein sequence, read N- to C-terminus: L-rhamnose-proton symporter (345 aa).

The next 10 helical transmembrane spans lie at 4–24 (AITM…CFYA), 38–58 (WSVG…ALLL), 68–88 (FSAA…IGNI), 101–121 (MGIG…TPLL), 131–151 (TAGG…VAIV), 175–195 (LVLA…MDAA), 214–234 (LPSY…FCFI), 259–279 (VLLS…YAWG), 290–310 (ISWM…GLLL), and 323–343 (VLSL…LGMA).

Belongs to the L-rhamnose transporter (TC 2.A.7.6) family.

It is found in the cell inner membrane. The enzyme catalyses L-rhamnopyranose(in) + H(+)(in) = L-rhamnopyranose(out) + H(+)(out). In terms of biological role, uptake of L-rhamnose across the cytoplasmic membrane with the concomitant transport of protons into the cell (symport system). The chain is L-rhamnose-proton symporter from Cronobacter sakazakii (strain ATCC BAA-894) (Enterobacter sakazakii).